A 48-amino-acid polypeptide reads, in one-letter code: uncharacterized protein (48 aa).

A helical membrane pass occupies residues 6-26; that stretch reads IILLMIVCLVVSVLVVVWIIL.

It is found in the host membrane. This is an uncharacterized protein from Spiroplasma melliferum (SpV4).